The sequence spans 37 residues: Large ribosomal subunit protein bL36 (37 aa).

It belongs to the bacterial ribosomal protein bL36 family.

The sequence is that of Large ribosomal subunit protein bL36 from Thermosynechococcus vestitus (strain NIES-2133 / IAM M-273 / BP-1).